The primary structure comprises 398 residues: 8-amino-7-oxononanoate synthase (398 aa).

A substrate-binding site is contributed by Arg23. Residue 110–111 (GY) coordinates pyridoxal 5'-phosphate. Substrate is bound at residue His135. Residues Ser181, His209, and Thr237 each coordinate pyridoxal 5'-phosphate. N6-(pyridoxal phosphate)lysine is present on Lys240. Thr354 contributes to the substrate binding site.

It belongs to the class-II pyridoxal-phosphate-dependent aminotransferase family. BioF subfamily. As to quaternary structure, homodimer. The cofactor is pyridoxal 5'-phosphate.

The catalysed reaction is 6-carboxyhexanoyl-[ACP] + L-alanine + H(+) = (8S)-8-amino-7-oxononanoate + holo-[ACP] + CO2. Its pathway is cofactor biosynthesis; biotin biosynthesis. In terms of biological role, catalyzes the decarboxylative condensation of pimeloyl-[acyl-carrier protein] and L-alanine to produce 8-amino-7-oxononanoate (AON), [acyl-carrier protein], and carbon dioxide. In Anaeromyxobacter dehalogenans (strain 2CP-1 / ATCC BAA-258), this protein is 8-amino-7-oxononanoate synthase.